Here is a 304-residue protein sequence, read N- to C-terminus: Glycosyltransferase AglE (304 aa).

It belongs to the glycosyltransferase 2 family.

It localises to the cell membrane. Its pathway is cell surface structure biogenesis; S-layer biogenesis. In terms of biological role, involved in the assembly of a N-linked pentasaccharide that decorates the S-layer glycoprotein and flagellins. Catalyzes the addition to the dolichol phosphate carrier of the hexuronic acid found at position 4 of the pentasaccharide. In Haloferax volcanii (strain ATCC 29605 / DSM 3757 / JCM 8879 / NBRC 14742 / NCIMB 2012 / VKM B-1768 / DS2) (Halobacterium volcanii), this protein is Glycosyltransferase AglE (aglE).